We begin with the raw amino-acid sequence, 341 residues long: Muscleblind-like protein 1 (341 aa).

Threonine 6 bears the Phosphothreonine mark. 4 consecutive C3H1-type zinc fingers follow at residues 13–41, 47–73, 178–206, and 214–240; these read WLTL…HPSK, NGRV…HPPP, TDRL…HPAD, and DNTV…HPPA.

Belongs to the muscleblind family. Interacts with DDX1 and YBX1. Interacts with HNRNPH1; the interaction in RNA-independent. Interacts with RBPMS; the interaction allows cooperative assembly of RNA-bound stable cell-specific alternative splicing regulatory complexes. Highly expressed in cardiac and skeletal muscle. Weakly expressed in heart and eye (at protein level).

The protein localises to the nucleus. It localises to the cytoplasm. It is found in the cytoplasmic granule. Functionally, mediates pre-mRNA alternative splicing regulation. Acts either as activator or repressor of splicing on specific pre-mRNA targets. Inhibits cardiac troponin-T (TNNT2) pre-mRNA exon inclusion but induces insulin receptor (IR) pre-mRNA exon inclusion in muscle. Antagonizes the alternative splicing activity pattern of CELF proteins. Regulates the TNNT2 exon 5 skipping through competition with U2AF2. Inhibits the formation of the spliceosome A complex on intron 4 of TNNT2 pre-mRNA. Binds to the stem-loop structure within the polypyrimidine tract of TNNT2 intron 4 during spliceosome assembly. Binds to the 5'-YGCU(U/G)Y-3'consensus sequence. Binds to the IR RNA. Binds to CUG triplet repeat expansion in myotonic dystrophy muscle cells by sequestering the target RNAs. Together with RNA binding proteins RBPMS and RBFOX2, activates vascular smooth muscle cells alternative splicing events. Regulates NCOR2 alternative splicing. The polypeptide is Muscleblind-like protein 1 (Mbnl1) (Mus musculus (Mouse)).